Consider the following 92-residue polypeptide: DNA/RNA-binding protein Alba (92 aa).

An N6-acetyllysine modification is found at Lys-11.

Belongs to the histone-like Alba family. In terms of processing, acetylated. Acetylation at Lys-11 decreases DNA-binding affinity.

It is found in the cytoplasm. Its subcellular location is the chromosome. Its function is as follows. Binds double-stranded DNA tightly but without sequence specificity. Involved in DNA compaction. The protein is DNA/RNA-binding protein Alba of Pyrobaculum islandicum (strain DSM 4184 / JCM 9189 / GEO3).